We begin with the raw amino-acid sequence, 444 residues long: NAD-capped RNA hydrolase NUDT12 (444 aa).

ANK repeat units lie at residues 11-40 and 60-80; these read EIIS…SLLN and SRQT…ANLL. Lys-167 carries the post-translational modification N6-succinyllysine. Zn(2+) contacts are provided by Cys-266 and Cys-269. An N6-succinyllysine modification is found at Lys-274. 2 residues coordinate Zn(2+): Cys-284 and Cys-289. Substrate is bound by residues Tyr-300, 336 to 338, Glu-352, Glu-356, and Glu-397; that span reads AGF. One can recognise a Nudix hydrolase domain in the interval 301 to 435; sequence PRVDPVVIMQ…SRAIAHQLIK (135 aa). Mg(2+) contacts are provided by Ala-336, Glu-352, Glu-356, and Glu-397. The Nudix box signature appears at 337–358; sequence GFIEPGETIEDAVRREVEEESG. The Microbody targeting signal motif lies at 442-444; it reads PNL.

Belongs to the Nudix hydrolase family. NudC subfamily. In terms of assembly, homodimer. Homodimerization is essential for its catalytic activity and protein stability. Interacts (via ANK repeats) with BLMH. Mg(2+) is required as a cofactor. Zn(2+) serves as cofactor.

It is found in the cytoplasm. It localises to the peroxisome. The protein resides in the cytoplasmic granule. The catalysed reaction is a 5'-end NAD(+)-phospho-ribonucleoside in mRNA + H2O = a 5'-end phospho-adenosine-phospho-ribonucleoside in mRNA + beta-nicotinamide D-ribonucleotide + 2 H(+). It carries out the reaction NAD(+) + H2O = beta-nicotinamide D-ribonucleotide + AMP + 2 H(+). It catalyses the reaction NADH + H2O = reduced beta-nicotinamide D-ribonucleotide + AMP + 2 H(+). The enzyme catalyses NADPH + H2O = reduced beta-nicotinamide D-ribonucleotide + adenosine 2',5'-bisphosphate + 2 H(+). Its function is as follows. mRNA decapping enzyme that specifically removes the nicotinamide adenine dinucleotide (NAD) cap from a subset of mRNAs by hydrolyzing the diphosphate linkage to produce nicotinamide mononucleotide (NMN) and 5' monophosphate mRNA. The NAD-cap is present at the 5'-end of some RNAs; in contrast to the canonical N7 methylguanosine (m7G) cap, the NAD cap promotes mRNA decay. Preferentially acts on NAD-capped transcripts in response to nutrient stress. Also acts on free nicotinamide adenine dinucleotide molecules: hydrolyzes NAD(H) into NMN(H) and AMP, and NADPH into NMNH and 2',5'-ADP. May act to regulate the concentration of peroxisomal nicotinamide nucleotide cofactors required for oxidative metabolism in this organelle. Regulates the levels of circadian clock components PER1, PER2, PER3 and CRY2 in the liver. This chain is NAD-capped RNA hydrolase NUDT12, found in Bos taurus (Bovine).